Consider the following 696-residue polypeptide: Methionine synthase reductase (696 aa).

Positions 4–147 (FLLLYATQRG…VVEPWIDGLW (144 aa)) constitute a Flavodoxin-like domain. FMN contacts are provided by residues 10–14 (TQRGQ) and 93–124 (LLGLGDSEYTYFCNGGKVIDKRLQELGAQRFY). Residues 166–245 (TLSRASDAPL…SSLSIPAVPP (80 aa)) are hinge. 2 positions are modified to phosphoserine: serine 171 and serine 188. One can recognise an FAD-binding FR-type domain in the interval 269 to 531 (DPSFQVPISK…PRATNAFHLP (263 aa)). Lysine 289 contacts NADP(+). Residues 449-452 (RPYS) and 485-488 (GVCT) each bind FAD. Residues 608-609 (SR), 622-624 (YVQ), and aspartate 657 contribute to the NADP(+) site. Tryptophan 695 is an FAD binding site.

Forms a multiprotein complex with MMACHC, MMADHC and MTR. Requires FAD as cofactor. The cofactor is FMN.

It localises to the cytoplasm. The catalysed reaction is 2 methylcob(III)alamin-[methionine synthase] + 2 S-adenosyl-L-homocysteine + NADP(+) + H(+) = 2 cob(II)alamin-[methionine synthase] + 2 S-adenosyl-L-methionine + NADPH. The enzyme catalyses 2 cob(II)alamin + A + 2 H2O + 2 H(+) = 2 aquacob(III)alamin + AH2. Key enzyme in methionine and folate homeostasis responsible for the reactivation of methionine synthase (MTR/MS) activity by catalyzing the reductive methylation of MTR-bound cob(II)alamin. Cobalamin (vitamin B12) forms a complex with MTR to serve as an intermediary in methyl transfer reactions that cycles between MTR-bound methylcob(III)alamin and MTR bound-cob(I)alamin forms, and occasional oxidative escape of the cob(I)alamin intermediate during the catalytic cycle leads to the inactive cob(II)alamin species. The processing of cobalamin in the cytosol occurs in a multiprotein complex composed of at least MMACHC, MMADHC, MTRR and MTR which may contribute to shuttle safely and efficiently cobalamin towards MTR in order to produce methionine. Also necessary for the utilization of methyl groups from the folate cycle, thereby affecting transgenerational epigenetic inheritance. Also acts as a molecular chaperone for methionine synthase by stabilizing apoMTR and incorporating methylcob(III)alamin into apoMTR to form the holoenzyme. Also serves as an aquacob(III)alamin reductase by reducing aquacob(III)alamin to cob(II)alamin; this reduction leads to stimulation of the conversion of apoMTR and aquacob(III)alamin to MTR holoenzyme. The chain is Methionine synthase reductase from Mus musculus (Mouse).